The sequence spans 555 residues: MGIHSSAENVALENVRQSVTYHPSVWGDYFLTPASNHEESSTSEGEELQESRQEVEKLLGATHDDSLQKLELIDAIQRLGVDHHFQKEIEKSLQDIYLRCCNDKDDYDHNQTDLHTVALRFRLLRQQGYNISSETFNKFTDRNGKFEESLADDVRGMLSLYEAAHCGVQGEKILDEALVFSSSNLKSILAKNHMSNSGLTARIEEAFDTPIRKCLTNFGARKFMSMYEEDESHSEALLKFARLDFNFSQKLHQKEISDLTRWWKELDFKTKLPFARDRMVECYCWTLGIHPEPQYNLARNFLSKVIMLASVIDDIYDVRGTLDELQLFTDAIQRWDISAMEQLPPYMRVCYEALLNVYAEVEELERIDGPYRVHYAKEEMKKLARAYLEESQWLYKKYIPTFKEYMSVAIPSSGYIMVAGNCLVGLGNSLVMKDFDWVSCEPLMVKASAIIARLMDDMAGHGFEKKISAVECYTNENGASEKEAFEELEKQVSNAWKDMNQEFLHPTAVSMTVLTRVLNAARVIHLLYKDGDSYTNSKTYIKELIEAVLIQPVKI.

Mg(2+) is bound by residues Asp-313, Asp-317, Asp-456, and Glu-464. Residues 313-317 carry the DDXXD motif motif; the sequence is DDIYD.

This sequence belongs to the terpene synthase family. It depends on Mg(2+) as a cofactor.

It carries out the reaction (2E,6E)-farnesyl diphosphate = (+)-(E)-beta-caryophyllene + diphosphate. It functions in the pathway secondary metabolite biosynthesis; terpenoid biosynthesis. In terms of biological role, sesquiterpene synthase converting farnesyl diphosphate to beta-caryophyllene as the major product. The chain is Beta-caryophyllene synthase from Phyla dulcis (Aztec sweet herb).